Reading from the N-terminus, the 226-residue chain is Pyridoxal 5'-phosphate synthase subunit PdxT (226 aa).

60–62 (GES) is an L-glutamine binding site. The active-site Nucleophile is the Cys92. L-glutamine is bound by residues Arg121 and 150-151 (IR). Active-site charge relay system residues include His191 and Glu193.

It belongs to the glutaminase PdxT/SNO family. As to quaternary structure, in the presence of PdxS, forms a dodecamer of heterodimers. Only shows activity in the heterodimer.

The catalysed reaction is aldehydo-D-ribose 5-phosphate + D-glyceraldehyde 3-phosphate + L-glutamine = pyridoxal 5'-phosphate + L-glutamate + phosphate + 3 H2O + H(+). It carries out the reaction L-glutamine + H2O = L-glutamate + NH4(+). The protein operates within cofactor biosynthesis; pyridoxal 5'-phosphate biosynthesis. In terms of biological role, catalyzes the hydrolysis of glutamine to glutamate and ammonia as part of the biosynthesis of pyridoxal 5'-phosphate. The resulting ammonia molecule is channeled to the active site of PdxS. The chain is Pyridoxal 5'-phosphate synthase subunit PdxT from Nocardia farcinica (strain IFM 10152).